Consider the following 168-residue polypeptide: Nicotinamide-nucleotide adenylyltransferase (168 aa).

The protein belongs to the archaeal NMN adenylyltransferase family.

It localises to the cytoplasm. The enzyme catalyses beta-nicotinamide D-ribonucleotide + ATP + H(+) = diphosphate + NAD(+). It participates in cofactor biosynthesis; NAD(+) biosynthesis; NAD(+) from nicotinamide D-ribonucleotide: step 1/1. The polypeptide is Nicotinamide-nucleotide adenylyltransferase (Methanocorpusculum labreanum (strain ATCC 43576 / DSM 4855 / Z)).